The sequence spans 83 residues: Cell division protein ZapB (83 aa).

Residues 7-80 are a coiled coil; that stretch reads EMLEKLEAKV…RVRTLLGKMD (74 aa).

The protein belongs to the ZapB family. As to quaternary structure, homodimer. The ends of the coiled-coil dimer bind to each other, forming polymers. Interacts with FtsZ.

The protein localises to the cytoplasm. Its function is as follows. Non-essential, abundant cell division factor that is required for proper Z-ring formation. It is recruited early to the divisome by direct interaction with FtsZ, stimulating Z-ring assembly and thereby promoting cell division earlier in the cell cycle. Its recruitment to the Z-ring requires functional FtsA or ZipA. The chain is Cell division protein ZapB from Photobacterium profundum (strain SS9).